The sequence spans 91 residues: Small ribosomal subunit protein uS19 (91 aa).

Belongs to the universal ribosomal protein uS19 family.

Protein S19 forms a complex with S13 that binds strongly to the 16S ribosomal RNA. This Shouchella clausii (strain KSM-K16) (Alkalihalobacillus clausii) protein is Small ribosomal subunit protein uS19.